Reading from the N-terminus, the 406-residue chain is 4-hydroxy-3-methylbut-2-en-1-yl diphosphate synthase (ferredoxin) (406 aa).

[4Fe-4S] cluster is bound by residues Cys-314, Cys-317, Cys-348, and Glu-355.

The protein belongs to the IspG family. [4Fe-4S] cluster is required as a cofactor.

It carries out the reaction (2E)-4-hydroxy-3-methylbut-2-enyl diphosphate + 2 oxidized [2Fe-2S]-[ferredoxin] + H2O = 2-C-methyl-D-erythritol 2,4-cyclic diphosphate + 2 reduced [2Fe-2S]-[ferredoxin] + H(+). The protein operates within isoprenoid biosynthesis; isopentenyl diphosphate biosynthesis via DXP pathway; isopentenyl diphosphate from 1-deoxy-D-xylulose 5-phosphate: step 5/6. Its function is as follows. Converts 2C-methyl-D-erythritol 2,4-cyclodiphosphate (ME-2,4cPP) into 1-hydroxy-2-methyl-2-(E)-butenyl 4-diphosphate. In Prochlorococcus marinus (strain MIT 9313), this protein is 4-hydroxy-3-methylbut-2-en-1-yl diphosphate synthase (ferredoxin).